The primary structure comprises 71 residues: MENKFDMEKFKKLAAVVSEDELDTLLDETTVGAGSSNDCADLILKITGVVVSATSKFDWCPTGACTTSCRF.

The propeptide at 1–33 is cleaved by FlvT; it reads MENKFDMEKFKKLAAVVSEDELDTLLDETTVGA. A cross-link (lanthionine (Ser-Cys); by FlvM2) is located at residues 35-39; it reads SSNDC. Serine 36 bears the 2,3-didehydroalanine (Ser); by FlvM2 mark. 3 consecutive cross-links (beta-methyllanthionine (Thr-Cys); by FlvM2) follow at residues 54 to 60, 62 to 65, and 66 to 69; these read TSKFDWC, TGAC, and TTSC.

Post-translationally, contains LL-lanthionine and DL-beta-methyllanthionine, when coepressed in E.coli with the flavecin synthetase FlvM2.

The protein localises to the secreted. In terms of biological role, lanthionine-containing peptide antibiotic (lantibiotic) that is probably active on Gram-positive bacteria, since its analog [Del1]Flvbeta.c shows antibacterial activity against M.luteus. This activity is not synergistically enhanced by [Del2]Flvalpha.a, an analog of Flvalpha.a, which is encoded by the same operon than Flvbeta.c. The bactericidal activity of lantibiotics is based on depolarization of energized bacterial cytoplasmic membranes, initiated by the formation of aqueous transmembrane pores. The protein is Lantibiotic Flvbeta.c of Ruminococcus flavefaciens.